We begin with the raw amino-acid sequence, 2149 residues long: Non-reducing polyketide synthase PvBS090_009107 (2149 aa).

The tract at residues 8–244 (YLFGDQTGEF…VRVPVHAPYH (237 aa)) is N-terminal acylcarrier protein transacylase domain (SAT). Residues 375–806 (QSKIAIIGLS…GGNTALLIED (432 aa)) form the Ketosynthase family 3 (KS3) domain. Catalysis depends on for beta-ketoacyl synthase activity residues Cys-547, His-682, and His-724. The malonyl-CoA:ACP transacylase (MAT) domain stretch occupies residues 911–1231 (FVFTGQGAQY…LSAIYLAGVD (321 aa)). Ser-1000 acts as the For acyl/malonyl transferase activity in catalysis. Residues 1290–1604 (TTSVQRIVET…RQVLNTVLPP (315 aa)) are product template (PT) domain. The interval 1294–1426 (QRIVETRDEG…CLVKFSDTHL (133 aa)) is N-terminal hotdog fold. The 306-residue stretch at 1294-1599 (QRIVETRDEG…FQGVPRQVLN (306 aa)) folds into the PKS/mFAS DH domain. The active-site Proton acceptor; for dehydratase activity is the His-1326. The interval 1454 to 1599 (SHRMHRGMFY…FQGVPRQVLN (146 aa)) is C-terminal hotdog fold. The active-site Proton donor; for dehydratase activity is the Asp-1512. Residues 1604–1631 (PAGGSKAAPRTTARAVPPPPINVEKPKS) are disordered. In terms of domain architecture, Carrier 1 spans 1649-1726 (SAGPSVLVQA…DLKQLLSQAS (78 aa)). Ser-1686 bears the O-(pantetheine 4'-phosphoryl)serine mark. Low complexity-rich tracts occupy residues 1722–1731 (LSQASPSDSS) and 1744–1755 (SSSTEPSTPGTP). The segment at 1722–1763 (LSQASPSDSSDSSEESHYSFRDSSSTEPSTPGTPAFFSPKRG) is disordered. In terms of domain architecture, Carrier 2 spans 1769-1846 (VGESETIKTI…AVETALDLKP (78 aa)). Ser-1806 carries the post-translational modification O-(pantetheine 4'-phosphoryl)serine. Positions 1875-2147 (STHPPATSIL…KLSAFIGRAM (273 aa)) are thioesterase (TE) domain. The active-site For thioesterase activity is Ser-1965.

It carries out the reaction 6 malonyl-CoA + acetyl-CoA + 6 H(+) = naphtopyrone YWA1 + 6 CO2 + 7 CoA + H2O. The protein operates within secondary metabolite biosynthesis. Its pathway is pigment biosynthesis. Non-reducing polyketide synthase; part of the gene cluster 24 that mediates the biosynthesis of a pigment with an aromatic structure protecting the pigmented fungus from both ionizing and non-ionizing radiations based on a mechanism similar to melanin, that is, free radical quenching and spherical spatial arrangement. Catalyzes the biosynthesis of the gamma-naphthopyrone precursor YWA1, via condensation of one acetyl-CoA starter unit with 6 malonyl-CoA units. YWA1 is probably further processed by the additional enzymes present within the cluster 24, however these additional steps have not been characterized yet. YWA1 is not converted to DHN-melanin in Byssochlamys spectabilis since the use of the DHN-melanin pathway inhibitor pyroquilon does not result in a loss of pigmentation. In Byssochlamys spectabilis (Paecilomyces variotii), this protein is Non-reducing polyketide synthase PvBS090_009107.